We begin with the raw amino-acid sequence, 120 residues long: Seripauperin-2 (120 aa).

The chain crosses the membrane as a helical span at residues 7-24 (IAAGVAAIAATASATTTL).

It belongs to the SRP1/TIP1 family. Seripauperin subfamily.

It localises to the membrane. This is Seripauperin-2 (PAU2) from Saccharomyces cerevisiae (strain ATCC 204508 / S288c) (Baker's yeast).